The sequence spans 282 residues: Ribosomal RNA small subunit methyltransferase A (282 aa).

His-11, Leu-13, Gly-44, Glu-65, Asp-90, and Asn-106 together coordinate S-adenosyl-L-methionine.

The protein belongs to the class I-like SAM-binding methyltransferase superfamily. rRNA adenine N(6)-methyltransferase family. RsmA subfamily.

The protein localises to the cytoplasm. The catalysed reaction is adenosine(1518)/adenosine(1519) in 16S rRNA + 4 S-adenosyl-L-methionine = N(6)-dimethyladenosine(1518)/N(6)-dimethyladenosine(1519) in 16S rRNA + 4 S-adenosyl-L-homocysteine + 4 H(+). Specifically dimethylates two adjacent adenosines (A1518 and A1519) in the loop of a conserved hairpin near the 3'-end of 16S rRNA in the 30S particle. May play a critical role in biogenesis of 30S subunits. The chain is Ribosomal RNA small subunit methyltransferase A from Synechococcus sp. (strain JA-2-3B'a(2-13)) (Cyanobacteria bacterium Yellowstone B-Prime).